The following is a 575-amino-acid chain: Proline--tRNA ligase (575 aa).

Belongs to the class-II aminoacyl-tRNA synthetase family. ProS type 1 subfamily. In terms of assembly, homodimer.

The protein localises to the cytoplasm. It catalyses the reaction tRNA(Pro) + L-proline + ATP = L-prolyl-tRNA(Pro) + AMP + diphosphate. In terms of biological role, catalyzes the attachment of proline to tRNA(Pro) in a two-step reaction: proline is first activated by ATP to form Pro-AMP and then transferred to the acceptor end of tRNA(Pro). As ProRS can inadvertently accommodate and process non-cognate amino acids such as alanine and cysteine, to avoid such errors it has two additional distinct editing activities against alanine. One activity is designated as 'pretransfer' editing and involves the tRNA(Pro)-independent hydrolysis of activated Ala-AMP. The other activity is designated 'posttransfer' editing and involves deacylation of mischarged Ala-tRNA(Pro). The misacylated Cys-tRNA(Pro) is not edited by ProRS. This chain is Proline--tRNA ligase, found in Solidesulfovibrio magneticus (strain ATCC 700980 / DSM 13731 / RS-1) (Desulfovibrio magneticus).